Here is a 312-residue protein sequence, read N- to C-terminus: Aldehyde reductase YPR1 (312 aa).

Y56 (proton donor) is an active-site residue. Residue H112 participates in substrate binding. NADP(+) is bound at residue 220 to 274; it reads SPFGSANAPLLKEQAIIDMAKKHGVEPAQLIISWSIQRGYVVLAKSVNPERIVSN.

This sequence belongs to the aldo/keto reductase family.

The protein resides in the cytoplasm. The enzyme catalyses a primary alcohol + NADP(+) = an aldehyde + NADPH + H(+). The catalysed reaction is 2-methylbutan-1-ol + NADP(+) = 2-methylbutanal + NADPH + H(+). It catalyses the reaction hexan-1-ol + NADP(+) = hexanal + NADPH + H(+). Aldehyde reductase with broad substrate specificity, catalyzing the NADPH-dependent reduction of aldehydes into the corresponding alcohols. In vitro, displays high specific activity towards 2-methylbutanal (2-methylbutyraldehyde), as well as other aldehydes such as hexanal (a toxic lipid peroxidation product and phytoalexin), but exhibits extremely low activity as a glycerol dehydrogenase. Seems to contribute to 2-methylbutanal reduction in vivo, and may therefore play a role in isoleucine catabolism and fusel alcohol formation. This chain is Aldehyde reductase YPR1 (YPR1), found in Saccharomyces cerevisiae (strain ATCC 204508 / S288c) (Baker's yeast).